Reading from the N-terminus, the 258-residue chain is HVA22-like protein j (258 aa).

Residues A153–A258 form a disordered region. The segment covering Q156–S169 has biased composition (polar residues). Over residues W206 to P215 the composition is skewed to pro residues.

Belongs to the DP1 family.

The sequence is that of HVA22-like protein j (HVA22J) from Arabidopsis thaliana (Mouse-ear cress).